Reading from the N-terminus, the 637-residue chain is Sterol 3-beta-glucosyltransferase UGT80A2 (637 aa).

Disordered stretches follow at residues 1-29 (MPEI…RASV) and 66-112 (VAES…TERQ). Residues 13–24 (SSSSSSSSSSSS) show a composition bias toward low complexity. The span at 67-79 (AESSGTGNKSFSR) shows a compositional bias: polar residues. Residues 103-112 (RLDKSKTERQ) are compositionally biased toward basic and acidic residues.

It belongs to the glycosyltransferase 28 family. In terms of tissue distribution, expressed in roots, cauline leaf epidermal cells, stomata, stamen, pollen and around the base of siliques.

It carries out the reaction a sterol + UDP-alpha-D-glucose = a sterol 3-beta-D-glucoside + UDP + H(+). Functionally, involved in the biosynthesis of sterol glucosides. Catalyzes the synthesis of steryl glycosides (SGs) and acyl steryl glycosides (ASGs) which are the most abundant sterol derivatives in higher plants. Can act on several sterols like sitosterol, campesterol and stigmasterol. Both UGT80A2 and UGT80B1 are required for the normal production of SGs and ASGs in seeds. This Arabidopsis thaliana (Mouse-ear cress) protein is Sterol 3-beta-glucosyltransferase UGT80A2 (UGT80A2).